The sequence spans 345 residues: Adenine deaminase (345 aa).

Zn(2+) is bound by residues His24, His26, and His204. Residue Glu207 is the Proton donor of the active site. Position 285 (Asp285) interacts with Zn(2+). Asp286 is a substrate binding site.

The protein belongs to the metallo-dependent hydrolases superfamily. Adenosine and AMP deaminases family. Adenine deaminase type 2 subfamily. Zn(2+) serves as cofactor.

It carries out the reaction adenine + H2O + H(+) = hypoxanthine + NH4(+). In terms of biological role, catalyzes the hydrolytic deamination of adenine to hypoxanthine. Plays an important role in the purine salvage pathway and in nitrogen catabolism. In Albidiferax ferrireducens (strain ATCC BAA-621 / DSM 15236 / T118) (Rhodoferax ferrireducens), this protein is Adenine deaminase.